The sequence spans 622 residues: Chromosomal replication initiator protein DnaA (622 aa).

Residues 1-99 are domain I, interacts with DnaA modulators; the sequence is MADVPADLAA…SAGEPPAPPA (99 aa). The disordered stretch occupies residues 88–282; sequence DDSAGEPPAP…APGPGEPHAR (195 aa). The domain II stretch occupies residues 100–281; the sequence is PPMHQSHQGP…PAPGPGEPHA (182 aa). 2 stretches are compositionally biased toward basic and acidic residues: residues 118 to 137 and 176 to 210; these read QRDD…RPSD and GYQD…EPWR. Positions 250-262 are enriched in gly residues; it reads PGGHGPGRTGGSV. A domain III, AAA+ region region spans residues 282–498; it reads RLNPKYLFDT…GALIRVTAFA (217 aa). ATP is bound by residues glycine 326, glycine 328, lysine 329, and threonine 330. The tract at residues 499–622 is domain IV, binds dsDNA; that stretch reads SLNRQPVDLG…TELTNRIKNG (124 aa).

The protein belongs to the DnaA family. Oligomerizes as a right-handed, spiral filament on DNA at oriC.

Its subcellular location is the cytoplasm. Functionally, plays an essential role in the initiation and regulation of chromosomal replication. ATP-DnaA binds to the origin of replication (oriC) to initiate formation of the DNA replication initiation complex once per cell cycle. Binds the DnaA box (a 9 base pair repeat at the origin) and separates the double-stranded (ds)DNA. Forms a right-handed helical filament on oriC DNA; dsDNA binds to the exterior of the filament while single-stranded (ss)DNA is stabiized in the filament's interior. The ATP-DnaA-oriC complex binds and stabilizes one strand of the AT-rich DNA unwinding element (DUE), permitting loading of DNA polymerase. After initiation quickly degrades to an ADP-DnaA complex that is not apt for DNA replication. Binds acidic phospholipids. The chain is Chromosomal replication initiator protein DnaA from Streptomyces griseus subsp. griseus (strain JCM 4626 / CBS 651.72 / NBRC 13350 / KCC S-0626 / ISP 5235).